A 598-amino-acid chain; its full sequence is Elongation factor 4 (598 aa).

The tr-type G domain occupies 2-184; sequence KNIRNFSIIA…EIVRCIPPPV (183 aa). GTP-binding positions include 14–19 and 131–134; these read DHGKST and NKID.

The protein belongs to the TRAFAC class translation factor GTPase superfamily. Classic translation factor GTPase family. LepA subfamily.

The protein localises to the cell inner membrane. It catalyses the reaction GTP + H2O = GDP + phosphate + H(+). Required for accurate and efficient protein synthesis under certain stress conditions. May act as a fidelity factor of the translation reaction, by catalyzing a one-codon backward translocation of tRNAs on improperly translocated ribosomes. Back-translocation proceeds from a post-translocation (POST) complex to a pre-translocation (PRE) complex, thus giving elongation factor G a second chance to translocate the tRNAs correctly. Binds to ribosomes in a GTP-dependent manner. This Psychromonas ingrahamii (strain DSM 17664 / CCUG 51855 / 37) protein is Elongation factor 4.